The following is a 1537-amino-acid chain: DNA (cytosine-5)-methyltransferase 1 (1537 aa).

Positions 1–13 (MPARSAPPPPALP) are enriched in pro residues. Disordered stretches follow at residues 1–34 (MPAR…SEKE) and 97–232 (RASN…DEKR). Residues 8–105 (PPPALPPALR…SRASNGCAGN (98 aa)) form the DMAP1-binding domain. Residues 21 to 34 (RDLERDEDSLSEKE) are compositionally biased toward basic and acidic residues. Positions 129 to 154 (SSSSSSSSSSSSSSSSSSSSSLLPAP) are enriched in low complexity. Polar residues predominate over residues 171–194 (SPASSRVTRSSGRQPTILSVFSKG). An interaction with PCNA region spans residues 182 to 194 (GRQPTILSVFSKG). Acidic residues predominate over residues 215 to 227 (KDEEEEEELEEKE). Residues cysteine 263, cysteine 266, and histidine 329 each contribute to the Zn(2+) site. A Phosphoserine modification is found at serine 420. The CXXC-type zinc finger occupies 558–604 (NAMKRRRCGVCEVCQQPECGKCKACQNMVKFGGSGRSKQACLQRRCP). Cysteine 565, cysteine 568, cysteine 571, cysteine 576, cysteine 579, cysteine 582, cysteine 598, and cysteine 603 together coordinate Zn(2+). The tract at residues 614–638 (DEEVDDNIPEMPSPKKMLQGRKKKQ) is disordered. BAH domains are found at residues 667-791 (ETLE…ETPP) and 883-1011 (HYRK…EDPP). Residues 1006 to 1050 (SFEDPPNHARSSGNKGKGKGKGKGKGKGKSSTTCEQSEPEPTELK) form a disordered region. 7 repeat units span residues 1020–1021 (KG), 1022–1023 (KG), 1024–1025 (KG), 1026–1027 (KG), 1028–1029 (KG), 1030–1031 (KG), and 1032–1033 (KG). Residues 1020-1035 (KGKGKGKGKGKGKGKS) are 8 X 2 AA tandem repeats of K-G. Over residues 1021–1033 (GKGKGKGKGKGKG) the composition is skewed to basic residues. One copy of the 8; approximate repeat lies at 1034–1035 (KS). One can recognise an SAM-dependent MTase C5-type domain in the interval 1054–1513 (LRTLDVFSGC…LEIRACVGAR (460 aa)). S-adenosyl-L-methionine-binding positions include serine 1061, 1065–1066 (GL), 1083–1084 (EM), 1105–1106 (DC), and cysteine 1106. The active site involves cysteine 1141. S-adenosyl-L-methionine is bound by residues asparagine 1492 and valine 1494. Residues 1518–1537 (SGAAVAPPAPEKMEMTAAAD) are disordered.

It belongs to the class I-like SAM-binding methyltransferase superfamily. C5-methyltransferase family. As to quaternary structure, homodimer. Interacts with PCNA. As to expression, testis and lung.

The protein resides in the nucleus. The catalysed reaction is a 2'-deoxycytidine in DNA + S-adenosyl-L-methionine = a 5-methyl-2'-deoxycytidine in DNA + S-adenosyl-L-homocysteine + H(+). In terms of biological role, methylates CpG residues. Preferentially methylates hemimethylated DNA. It is responsible for maintaining methylation patterns established in development. Mediates transcriptional repression by direct binding to HDAC2. Plays a role in promoter hypermethylation and transcriptional silencing of tumor suppressor genes (TSGs) or other tumor-related genes. Also required to maintain a transcriptionally repressive state of genes in undifferentiated embryonic stem cells (ESCs). Associates at promoter regions of tumor suppressor genes (TSGs) leading to their gene silencing. The sequence is that of DNA (cytosine-5)-methyltransferase 1 (DNMT1) from Gallus gallus (Chicken).